Reading from the N-terminus, the 931-residue chain is MAALDSDSDEDLVSYGTGLEPLEEGERPKKPIPLQDQTVRDEKGRYKRFHGAFSGGFSAGYFNTVGSKEGWTPSSFVSSRQNRADKSVLGPEDFMDEEDLSEFGIAPKSIVTTDDFASKTKDRIREKARQLAAATAPIPGATLLDDLITPAKLSVGFELLRKMGWKEGQGIGPRVKRRPRRQKPDPGVKIYGCALPPGGSEGSEDEDDDYLPENVTFAPKDVTPVDFTPKDNVHGLAYKGLDPHQALFGTSGEHFNLFSGGPEETGDLLGDIGVNKGRKLGISGQAFGVGALEEEDDDIYATETLSKYDTVLKDEEPGDGLYGWTAPRQYKSQKESEKDLCYVGKILDGFSLASKPLSSKKIYPPPELPRDYRPVHYFRPVVAATSENSHLLQVLSESAGKPTNDPGTRSRHQLNACKRGELLGETPIQGAPTSVLEFLSQKDKERLKEVKQATDLKAAQLRARSLAQSASGSRPQPLSPDVGHCSWHMALSGGMASTRTSNFKPFAKDPEKQKRYEEFLANMKRGQKDALERCLDPGMTEWERGRERDEFARAALLYASSHSTLSSRFTHAQEEDDSEQVEVPRDQENDVSDKQSAVKMKMFGKLTRDTFEWHPDKLLCKRFNVPDPYPDSTLVGLPRVKRDKYSVFNFLTIPETASSPVTQASSEKVAQHRASDKSRKPSRWDTSKEEKKEDSISEFLSLARSKVGPAKPEPSPLVNKEEARATESVSNKVVNKDVDSQTEGEGSRPSMDLFKAIFASSSDEKSSSSEDEQGDSEDDQEGTREADFKSSQETDLVEASSVAQASEPAPQEPAPFFPIQKMQIDEREAFGPRLPPVFCPNARQKLEAPLKEKHKKNKEKHKTKKEHRRKKEKKKKHRKHKHKGKQKNKKSEKSSSSESTDSSDSQSEEGPTDLSPQELLRRLKRLPLRRQ.

Residues 1-12 are compositionally biased toward acidic residues; it reads MAALDSDSDEDL. 3 disordered regions span residues 1 to 41, 72 to 92, and 169 to 213; these read MAAL…TVRD, TPSS…LGPE, and QGIG…YLPE. A2 is modified (N-acetylalanine). S6 and S8 each carry phosphoserine. A compositionally biased stretch (polar residues) spans 72–81; that stretch reads TPSSFVSSRQ. The G-patch domain maps to 152–198; the sequence is KLSVGFELLRKMGWKEGQGIGPRVKRRPRRQKPDPGVKIYGCALPPG. Positions 202–211 are enriched in acidic residues; that stretch reads GSEDEDDDYL. K313 participates in a covalent cross-link: Glycyl lysine isopeptide (Lys-Gly) (interchain with G-Cter in SUMO2). Residues S358 and S479 each carry the phosphoserine modification. Disordered stretches follow at residues 567-594 and 659-931; these read SRFT…VSDK and SPVT…LRRQ. Residues 582–593 are compositionally biased toward basic and acidic residues; it reads EVPRDQENDVSD. Positions 659 to 668 are enriched in polar residues; it reads SPVTQASSEK. Residues 669–695 show a composition bias toward basic and acidic residues; the sequence is VAQHRASDKSRKPSRWDTSKEEKKEDS. S715 carries the phosphoserine modification. Over residues 769 to 780 the composition is skewed to acidic residues; it reads SEDEQGDSEDDQ. Over residues 781–792 the composition is skewed to basic and acidic residues; sequence EGTREADFKSSQ. The span at 852–888 shows a compositional bias: basic residues; it reads EKHKKNKEKHKTKKEHRRKKEKKKKHRKHKHKGKQKN. Residues 896–905 show a composition bias toward low complexity; it reads SSESTDSSDS. A compositionally biased stretch (basic residues) spans 922 to 931; the sequence is RLKRLPLRRQ.

It belongs to the GPATCH1 family.

This Bos taurus (Bovine) protein is G patch domain-containing protein 1 (GPATCH1).